Reading from the N-terminus, the 217-residue chain is MOB kinase activator-like 2 (217 aa).

The tract at residues 15–38 is disordered; the sequence is GKESIRGNYKPKKHPRGSSRHTMR. The segment covering 23-38 has biased composition (basic residues); it reads YKPKKHPRGSSRHTMR. Zn(2+) contacts are provided by Cys89, Cys94, His167, and His172.

This sequence belongs to the MOB1/phocein family.

This is MOB kinase activator-like 2 (mob2) from Dictyostelium discoideum (Social amoeba).